The sequence spans 337 residues: MSQVNIGINGFGRIGRIVFRNSVVHNTANVVAINDPFIDLEYMVYMLKYDSTHGVFNGDISTKDGKLIVNGKSIAVFAEKDPSNIPWGQAGAHYVVESTGVFTTIDKASAHIKGGAKKVVISAPSADAPMYVCGVNLDAYDPKAQVVSNASCTTNCLAPLAKVIHDKFGIVEGLMTTVHATTATQKTVDGPSAKDWRGGRAAAANIIPSSTGAAKAVGKVIPSLNGKLTGMAFRVPTTNVSVVDLTARLEKGASYDEIKAEVKRASENELKGILGYTEDAVVSQDFIGNSHSSIFDAAAGISLNNNFVKLVSWYDNEWGYSNRCLDLLVFMAQKDSA.

Residues 13–14, D35, and K80 each bind NAD(+); that span reads RI. D-glyceraldehyde 3-phosphate is bound by residues 151–153, T182, 211–212, and R234; these read SCT and TG. Catalysis depends on C152, which acts as the Nucleophile. NAD(+) is bound at residue N316.

It belongs to the glyceraldehyde-3-phosphate dehydrogenase family. Homotetramer.

It localises to the cytoplasm. It catalyses the reaction D-glyceraldehyde 3-phosphate + phosphate + NAD(+) = (2R)-3-phospho-glyceroyl phosphate + NADH + H(+). Its pathway is carbohydrate degradation; glycolysis; pyruvate from D-glyceraldehyde 3-phosphate: step 1/5. This is Glyceraldehyde-3-phosphate dehydrogenase (GAPD) from Mycosarcoma maydis (Corn smut fungus).